A 366-amino-acid polypeptide reads, in one-letter code: Alanine racemase (366 aa).

The active-site Proton acceptor; specific for D-alanine is Lys-40. Lys-40 carries the N6-(pyridoxal phosphate)lysine modification. A substrate-binding site is contributed by Arg-136. Residue Tyr-263 is the Proton acceptor; specific for L-alanine of the active site. Met-310 is a substrate binding site.

Belongs to the alanine racemase family. Requires pyridoxal 5'-phosphate as cofactor.

The catalysed reaction is L-alanine = D-alanine. It functions in the pathway amino-acid biosynthesis; D-alanine biosynthesis; D-alanine from L-alanine: step 1/1. Functionally, catalyzes the interconversion of L-alanine and D-alanine. May also act on other amino acids. This chain is Alanine racemase (alr), found in Streptococcus pyogenes serotype M2 (strain MGAS10270).